Consider the following 308-residue polypeptide: Dual oxidase maturation factor 1 (308 aa).

The Extracellular segment spans residues 1–21; that stretch reads MQANIFPFYPQPRTPFKFDTK. A helical transmembrane segment spans residues 22–42; that stretch reads IIEIIIICIVTACTFIIILPG. Topologically, residues 43–49 are cytoplasmic; the sequence is IRGKSRS. The chain crosses the membrane as a helical span at residues 50 to 70; it reads IWLLRILTSLFIGAVILAVNF. Over 71–91 the chain is Extracellular; it reads TSDWEMGTITATTVYKSFSHS. The chain crosses the membrane as a helical span at residues 92 to 112; it reads MLNASIGLWIGLKGLNITLIG. At 113–175 the chain is on the cytoplasmic side; it reads NPEYQLNETI…GLFQQYCIST (63 aa). Residues 176 to 198 traverse the membrane as a helical segment; that stretch reads YYSSGIMWIAFCSWILYNVLFSM. A topological domain (extracellular) is located at residue P199. The chain crosses the membrane as a helical span at residues 200–220; the sequence is VILYGIYMMFVTAICMLVSLI. Residues 221-247 are Cytoplasmic-facing; it reads SFASVRKAPVCNIQFGNSILKTHFGVS. A helical membrane pass occupies residues 248 to 268; the sequence is YWLSLITGLLCLIISLVLLFL. At 269–308 the chain is on the extracellular side; the sequence is YKTQPKVLQLIFSYGEEEDLSNKSENEEEHSSVLSLNEIL. N-linked (GlcNAc...) asparagine glycosylation occurs at N290.

This sequence belongs to the DUOXA family.

Its subcellular location is the membrane. In terms of biological role, possible role in maturation and transport from the endoplasmic reticulum to the plasma membrane of functional dual oxidase. This Xenopus laevis (African clawed frog) protein is Dual oxidase maturation factor 1 (duoxa1).